The chain runs to 327 residues: E3 ubiquitin ligase RNF121 (327 aa).

Ala2 is subject to N-acetylalanine. Helical transmembrane passes span 50–70, 79–99, 100–120, 148–168, and 172–192; these read MHAE…LLLV, SYNM…TVKL, HWWR…FVTF, ATGI…NLLF, and PEDA…YGVL. An RING-type; atypical zinc finger spans residues 226–276; that stretch reads CAVCGQQIFVDVSEEGIIENTYRLSCNHVFHEFCIRGWCIVGKKQTCPYCK. A helical membrane pass occupies residues 306-326; the sequence is LVAWQPVIIGVVQGINYILGL.

Belongs to the RNF121 family.

It is found in the endoplasmic reticulum membrane. It carries out the reaction S-ubiquitinyl-[E2 ubiquitin-conjugating enzyme]-L-cysteine + [acceptor protein]-L-lysine = [E2 ubiquitin-conjugating enzyme]-L-cysteine + N(6)-ubiquitinyl-[acceptor protein]-L-lysine.. Its pathway is protein modification; protein ubiquitination. Functionally, E3 ubiquitin ligase which accepts ubiquitin and transfers it to substrates thereby promoting their degradation by the endoplasmic reticulum-associated degradation (ERAD) pathway which is a pathway involved in ubiquitin-dependent degradation of misfolded endoplasmic reticulum proteins. May regulate the unfolded protein response to reduce endoplasmic reticulum stress. The protein is E3 ubiquitin ligase RNF121 (RNF121) of Homo sapiens (Human).